The primary structure comprises 84 residues: Large ribosomal subunit protein bL27 (84 aa).

The tract at residues 1 to 21 (MAHKKGGGSSKNGRDSQSKRL) is disordered.

This sequence belongs to the bacterial ribosomal protein bL27 family.

This Brachyspira hyodysenteriae (strain ATCC 49526 / WA1) protein is Large ribosomal subunit protein bL27.